A 273-amino-acid chain; its full sequence is Ribosomal RNA small subunit methyltransferase A (273 aa).

Residues asparagine 18, leucine 20, glycine 45, glutamate 66, aspartate 91, and asparagine 113 each contribute to the S-adenosyl-L-methionine site.

The protein belongs to the class I-like SAM-binding methyltransferase superfamily. rRNA adenine N(6)-methyltransferase family. RsmA subfamily.

The protein localises to the cytoplasm. The catalysed reaction is adenosine(1518)/adenosine(1519) in 16S rRNA + 4 S-adenosyl-L-methionine = N(6)-dimethyladenosine(1518)/N(6)-dimethyladenosine(1519) in 16S rRNA + 4 S-adenosyl-L-homocysteine + 4 H(+). Its function is as follows. Specifically dimethylates two adjacent adenosines (A1518 and A1519) in the loop of a conserved hairpin near the 3'-end of 16S rRNA in the 30S particle. May play a critical role in biogenesis of 30S subunits. This Escherichia coli O81 (strain ED1a) protein is Ribosomal RNA small subunit methyltransferase A.